Consider the following 636-residue polypeptide: Putative ankyrin repeat protein L766 (636 aa).

11 ANK repeats span residues 63–97, 99–129, 130–159, 161–190, 230–259, 261–284, 322–355, 372–400, 425–455, 517–546, and 548–575; these read NNYL…DYEL, STCH…YIDS, FGNI…FFNC, YYYL…KSNN, FDEK…NYDF, TIIN…YLTD, SRII…KTSI, NPDE…NIPD, DSLE…DTTI, NSIE…NDNN, and LSWA…DIYQ.

This is Putative ankyrin repeat protein L766 from Acanthamoeba polyphaga mimivirus (APMV).